Reading from the N-terminus, the 71-residue chain is UPF0437 protein asl1434 (71 aa).

The protein belongs to the UPF0437 family.

The sequence is that of UPF0437 protein asl1434 from Nostoc sp. (strain PCC 7120 / SAG 25.82 / UTEX 2576).